The following is a 453-amino-acid chain: Chromosomal replication initiator protein DnaA (453 aa).

Residues 1 to 73 (MNISPQYLWN…AQEVASVVGY (73 aa)) are domain I, interacts with DnaA modulators. Residues 73-112 (YPVDIQLTTAEGETMAMTGEAQSYQEKSLTQIAPESPKLN) form a domain II region. Residues 113-329 (QLNPRYTFSR…GALIRAIAYT (217 aa)) are domain III, AAA+ region. ATP contacts are provided by Gly157, Gly159, Lys160, and Thr161. A domain IV, binds dsDNA region spans residues 330 to 453 (SISGLSMTVQ…RINMASRTQS (124 aa)).

Belongs to the DnaA family. Oligomerizes as a right-handed, spiral filament on DNA at oriC.

Its subcellular location is the cytoplasm. In terms of biological role, plays an essential role in the initiation and regulation of chromosomal replication. ATP-DnaA binds to the origin of replication (oriC) to initiate formation of the DNA replication initiation complex once per cell cycle. Binds the DnaA box (a 9 base pair repeat at the origin) and separates the double-stranded (ds)DNA. Forms a right-handed helical filament on oriC DNA; dsDNA binds to the exterior of the filament while single-stranded (ss)DNA is stabiized in the filament's interior. The ATP-DnaA-oriC complex binds and stabilizes one strand of the AT-rich DNA unwinding element (DUE), permitting loading of DNA polymerase. After initiation quickly degrades to an ADP-DnaA complex that is not apt for DNA replication. Binds acidic phospholipids. This chain is Chromosomal replication initiator protein DnaA, found in Rippkaea orientalis (strain PCC 8801 / RF-1) (Cyanothece sp. (strain PCC 8801)).